The following is a 202-amino-acid chain: Protein GrpE 1 (202 aa).

This sequence belongs to the GrpE family. As to quaternary structure, homodimer.

It localises to the cytoplasm. Its function is as follows. Participates actively in the response to hyperosmotic and heat shock by preventing the aggregation of stress-denatured proteins, in association with DnaK and GrpE. It is the nucleotide exchange factor for DnaK and may function as a thermosensor. Unfolded proteins bind initially to DnaJ; upon interaction with the DnaJ-bound protein, DnaK hydrolyzes its bound ATP, resulting in the formation of a stable complex. GrpE releases ADP from DnaK; ATP binding to DnaK triggers the release of the substrate protein, thus completing the reaction cycle. Several rounds of ATP-dependent interactions between DnaJ, DnaK and GrpE are required for fully efficient folding. The protein is Protein GrpE 1 of Buchnera aphidicola subsp. Schizaphis graminum (strain Sg).